The following is a 77-amino-acid chain: uncharacterized protein (77 aa).

Disordered regions lie at residues Met1 to Asn34 and Leu56 to Arg77. Positions Asp8–Asp20 are enriched in basic and acidic residues. The segment covering Pro25 to Asn34 has biased composition (basic residues). The span at Leu56–Arg70 shows a compositional bias: basic and acidic residues.

This is an uncharacterized protein from Dictyostelium discoideum (Social amoeba).